The chain runs to 533 residues: Hydroxylamine reductase (533 aa).

Residues cysteine 3, cysteine 6, cysteine 15, and cysteine 21 each contribute to the [4Fe-4S] cluster site. Hybrid [4Fe-2O-2S] cluster contacts are provided by histidine 234, glutamate 258, cysteine 302, cysteine 389, cysteine 417, cysteine 442, glutamate 476, and lysine 478. Cysteine 389 carries the cysteine persulfide modification.

The protein belongs to the HCP family. It depends on [4Fe-4S] cluster as a cofactor. Hybrid [4Fe-2O-2S] cluster serves as cofactor.

The protein localises to the cytoplasm. It catalyses the reaction A + NH4(+) + H2O = hydroxylamine + AH2 + H(+). Catalyzes the reduction of hydroxylamine to form NH(3) and H(2)O. The sequence is that of Hydroxylamine reductase from Maridesulfovibrio salexigens (strain ATCC 14822 / DSM 2638 / NCIMB 8403 / VKM B-1763) (Desulfovibrio salexigens).